The sequence spans 206 residues: VEL1-related protein YOR387C (206 aa).

The N-terminal stretch at 1 to 19 (MSFLNIFTFFSVLVSVATA) is a signal peptide. Residues asparagine 26, asparagine 48, asparagine 91, asparagine 139, asparagine 152, and asparagine 183 are each glycosylated (N-linked (GlcNAc...) asparagine).

The protein belongs to the VEL1 family. N-glycosylated.

It localises to the cytoplasm. It is found in the cytosol. This Saccharomyces cerevisiae (strain ATCC 204508 / S288c) (Baker's yeast) protein is VEL1-related protein YOR387C.